A 181-amino-acid chain; its full sequence is Ion-translocating oxidoreductase complex subunit B (181 aa).

A hydrophobic region spans residues Met1–Ala26. The 4Fe-4S domain maps to Glu32–Val90. [4Fe-4S] cluster-binding residues include Cys49, Cys52, Cys57, Cys73, Cys110, Cys113, Cys116, Cys120, Cys140, Cys143, Cys146, and Cys150. 4Fe-4S ferredoxin-type domains follow at residues Lys101–Lys130 and Gln131–Val160.

Belongs to the 4Fe4S bacterial-type ferredoxin family. RnfB subfamily. In terms of assembly, the complex is composed of six subunits: RnfA, RnfB, RnfC, RnfD, RnfE and RnfG. [4Fe-4S] cluster is required as a cofactor.

It is found in the cell inner membrane. In terms of biological role, part of a membrane-bound complex that couples electron transfer with translocation of ions across the membrane. This is Ion-translocating oxidoreductase complex subunit B from Magnetococcus marinus (strain ATCC BAA-1437 / JCM 17883 / MC-1).